A 356-amino-acid polypeptide reads, in one-letter code: Arginine kinase Lit v 2 (356 aa).

Positions K9–V91 constitute a Phosphagen kinase N-terminal domain. Residue G64–Y68 coordinates L-arginine. The 238-residue stretch at F119–M356 folds into the Phosphagen kinase C-terminal domain. ATP contacts are provided by residues S122–R126 and H185. Position 225 (E225) interacts with L-arginine. ATP is bound at residue R229. An L-arginine-binding site is contributed by C271. ATP is bound by residues R280–H284 and R309–E314. L-arginine is bound at residue E314.

The protein belongs to the ATP:guanido phosphotransferase family. As to expression, expressed in muscle (at protein level). Expressed in muscle, heart, nerve, stomach and hemocytes, with the highest expression in muscle. Very low expression in eyestalk and intestine. Not expressed in hepatopancreas, gill and skin.

It carries out the reaction L-arginine + ATP = N(omega)-phospho-L-arginine + ADP + H(+). No change in activity after supplementation with 10 mM glucose. However, activity decreases significantly when glucose concentration is higher than 50 mM and almost all activity is lost with 200 mM glucose. Activity is significantly increased after treatment with 10 mM and 50 mM ATP. However, activity drops significantly with 200 mM ATP. Inhibited by 10-200 mM alpha-ketoglutarate. No change in activity after incubation with 10-200 mM L-citrulline, L-ornaline or glycerol. Functionally, catalyzes the reversible transfer of high energy ATP gamma-phosphate group to L-arginine. This chain is Arginine kinase Lit v 2, found in Penaeus vannamei (Whiteleg shrimp).